The following is a 77-amino-acid chain: Large ribosomal subunit protein bL28 (77 aa).

Belongs to the bacterial ribosomal protein bL28 family.

The chain is Large ribosomal subunit protein bL28 from Polaromonas naphthalenivorans (strain CJ2).